Reading from the N-terminus, the 137-residue chain is Drosulfakinins (137 aa).

The N-terminal stretch at 1–31 (MGLRSCTHFATLVIPLWALAFCFLVVVPVPA) is a signal peptide. A propeptide spanning residues 32–74 (QTNLQTSKGDRRLQDLESNMGAESDQPNANLVRPSLSRFGDKR) is cleaved from the precursor. At F81 the chain carries Phenylalanine amide. A propeptide spanning residues 85–107 (VPRPMIPIELDLLMDNDDENTKA) is cleaved from the precursor. Residue Y113 is modified to Sulfotyrosine. Residue F118 is modified to Phenylalanine amide. Sulfotyrosine is present on Y130. At F135 the chain carries Phenylalanine amide.

The protein belongs to the gastrin/cholecystokinin family.

It is found in the secreted. Its function is as follows. Drosulfakinin-0 (DSK 0) plays diverse biological roles including regulating gut muscle contraction in adults but not in larvae. The protein is Drosulfakinins of Drosophila yakuba (Fruit fly).